The primary structure comprises 128 residues: Large ribosomal subunit protein bL19 (128 aa).

The protein belongs to the bacterial ribosomal protein bL19 family.

In terms of biological role, this protein is located at the 30S-50S ribosomal subunit interface and may play a role in the structure and function of the aminoacyl-tRNA binding site. This is Large ribosomal subunit protein bL19 from Paraburkholderia xenovorans (strain LB400).